The sequence spans 130 residues: Small ribosomal subunit protein uS8 (130 aa).

This sequence belongs to the universal ribosomal protein uS8 family. Part of the 30S ribosomal subunit. Contacts proteins S5 and S12.

Functionally, one of the primary rRNA binding proteins, it binds directly to 16S rRNA central domain where it helps coordinate assembly of the platform of the 30S subunit. The chain is Small ribosomal subunit protein uS8 from Vibrio atlanticus (strain LGP32) (Vibrio splendidus (strain Mel32)).